Reading from the N-terminus, the 113-residue chain is Antisense of depressing factor protein 1 (113 aa).

The segment covering 1–11 (MGKCSMKKKGV) has biased composition (basic residues). Residues 1-35 (MGKCSMKKKGVGKNVGVGKKVQKKRSISTAERKRT) form a disordered region.

The protein belongs to the ADF1 family.

The protein resides in the nucleus. Functionally, transcriptional repressor which negatively regulates transcription of FYV5 by binding to the promoter on the sense strand. The protein is Antisense of depressing factor protein 1 of Saccharomyces cerevisiae (strain ATCC 204508 / S288c) (Baker's yeast).